Reading from the N-terminus, the 54-residue chain is MARNEIRPIVKLRSTAGTGYTYVTRKNRRNDPDRIVLRKYDPVLRRHVEFREER.

It belongs to the bacterial ribosomal protein bL33 family.

The polypeptide is Large ribosomal subunit protein bL33B (Mycolicibacterium smegmatis (strain ATCC 700084 / mc(2)155) (Mycobacterium smegmatis)).